A 225-amino-acid chain; its full sequence is UPF0725 protein At5g63820 (225 aa).

Belongs to the UPF0725 (EMB2204) family.

This is UPF0725 protein At5g63820 from Arabidopsis thaliana (Mouse-ear cress).